A 102-amino-acid polypeptide reads, in one-letter code: Legumin-like protein Mac i 2 (102 aa).

This sequence belongs to the 11S seed storage protein (globulins) family.

Its function is as follows. Seed storage protein. In Macadamia integrifolia (Macadamia nut), this protein is Legumin-like protein Mac i 2.